An 829-amino-acid polypeptide reads, in one-letter code: Sodium/hydrogen exchanger 3 (829 aa).

An N-terminal signal peptide occupies residues 1–26 (MWHRALGPGWKLLLALALTSLQGARG). Over 27 to 46 (AEEEPSSDGSFQVVTFKWHH) the chain is Extracellular. Residues 47–69 (VQDPYIIALWILVASLAKIVFHL) form a helical membrane-spanning segment. The Cytoplasmic portion of the chain corresponds to 70-77 (SHKVTSIV). A helical membrane pass occupies residues 78–97 (PESALLIVLGLVLGGIVWAA). Over 98–106 (DHIASFTLT) the chain is Extracellular. Residues 107-124 (PTLFFFYLLPPIVLDAGY) form a helical membrane-spanning segment. The Cytoplasmic segment spans residues 125-127 (FMP). A helical membrane pass occupies residues 128-163 (NRLFFGNLGTILLYAVIGTIWNAATTGLSLYGVFLS). Residues G133, G136, and T137 each coordinate a 1,2-diacyl-sn-glycero-3-phospho-(1D-myo-inositol). The Extracellular portion of the chain corresponds to 164–176 (GLMGELKIGLLDF). Residues 177–198 (LLFGSLIAAVDPVAVLAVFEEV) traverse the membrane as a helical segment. The Cytoplasmic segment spans residues 199-200 (HV). A helical transmembrane segment spans residues 201–232 (NEVLFIIVFGESLLNDAVTVVLYNVFESFVTL). The Extracellular portion of the chain corresponds to 233–239 (GGDAVTG). A helical membrane pass occupies residues 240 to 274 (VDCVKGIVSFFVVSLGGTLVGVIFAFLLSLVTRFT). Topologically, residues 275–276 (KH) are cytoplasmic. A helical transmembrane segment spans residues 277–299 (VRIIEPGFVFVISYLSYLTSEML). The Extracellular segment spans residues 300 to 301 (SL). Residues 302-318 (SSILAITFCGICCQKYV) traverse the membrane as a helical segment. Residues 319-325 (KANISEQ) lie on the Cytoplasmic side of the membrane. A helical transmembrane segment spans residues 326–354 (SATTVRYTMKMLASGAETIIFMFLGISAV). The Extracellular portion of the chain corresponds to 355-362 (NPDIWTWN). A helical membrane pass occupies residues 363–384 (TAFVLLTLVFISVYRAIGVVLQ). Over 385–397 (TWILNRYRMVQLE) the chain is Cytoplasmic. An a 1,2-diacyl-sn-glycero-3-phospho-(1D-myo-inositol)-binding site is contributed by M393. A helical membrane pass occupies residues 398-421 (TIDQVVMSYGGLRGAVAYALVVLL). Over 422–428 (DEKKVKE) the chain is Extracellular. A helical membrane pass occupies residues 429-462 (KNLFVSTTLIVVFFTVIFQGLTIKPLVQWLKVKR). Topologically, residues 463–829 (SEHREPKLNE…QPAAPESTHM (367 aa)) are cytoplasmic. Positions 492, 493, and 495 each coordinate a 1,2-diacyl-sn-glycero-3-phospho-(1D-myo-inositol). Phosphoserine is present on residues S550 and S558. Residues 571–585 (RPSTVEASVSYFLRE) are interaction with EZR. An interaction with NHERF4 region spans residues 586–663 (NVSAVCLDMQ…RKRLESFKSA (78 aa)). The interaction with AHCYL1 stretch occupies residues 587–691 (VSAVCLDMQS…AQKRRNSSIP (105 aa)). A phosphoserine mark is found at S588 and S603. Phosphoserine; by SGK1 is present on S659. Basic residues predominate over residues 677–687 (YKRERAQKRRN). Residues 677 to 696 (YKRERAQKRRNSSIPNGKLP) are disordered. Residues S714, S805, and S808 each carry the phosphoserine modification.

It belongs to the monovalent cation:proton antiporter 1 (CPA1) transporter (TC 2.A.36) family. As to quaternary structure, homodimer. Found in the forms of complex and dynamic macromolecular complexes. Binds NHERF1 and NHERF2. Interacts with CHP1; this interaction increases trafficking and activity of SLC9A3 at the plasma membrane. Interacts with CHP2 and SHANK2. Interacts with PDZK1 (via C-terminal PDZ domain). Interacts with NHERF4 and interactions decrease in response to elevated calcium ion levels. Interacts with AHCYL1; the interaction is required for SLC9A3 activity. Interacts with EZR; interaction targets SLC9A3 to the apical membrane. Interacts with SNX27 (via PDZ domains); directs SLC9A3 membrane insertion from early endosomes to the plasma membrane. Post-translationally, phosphorylated by PKA, which inhibits activity. Phosphorylation at Ser-659 by SGK1 is associated with increased abundance at the cell membrane. Phosphorylation at Ser-714 by CSNK2A1 regulates SLC9A3 activity through the formation of multiple signaling complexes.

The protein localises to the apical cell membrane. The protein resides in the cell membrane. Its subcellular location is the recycling endosome membrane. It localises to the early endosome membrane. It carries out the reaction Na(+)(in) + H(+)(out) = Na(+)(out) + H(+)(in). Its activity is regulated as follows. Seems to switch between active and inactive modes in response to various stimuli. Activated directly or indirectly by membrane phosphatidylinositol (PIs). Regulated by a variety of auxiliary proteins, which facilitate the maturation, cell surface expression and function of the transporter. Inhibited specifically by the drug tenapanor. Functionally, plasma membrane Na(+)/H(+) antiporter. Exchanges intracellular H(+) ions for extracellular Na(+) in 1:1 stoichiometry, playing a key role in salt and fluid absorption and pH homeostasis. Major apical Na(+)/H(+) exchanger in kidney and intestine playing an important role in renal and intestine Na(+) absorption and blood pressure regulation. This Mus musculus (Mouse) protein is Sodium/hydrogen exchanger 3.